Consider the following 75-residue polypeptide: UPF0291 protein lmo1304 (75 aa).

The interval 56–75 (DPNGKDVTPHKVKQLRKNKY) is disordered. The span at 65–75 (HKVKQLRKNKY) shows a compositional bias: basic residues.

It belongs to the UPF0291 family.

Its subcellular location is the cytoplasm. The sequence is that of UPF0291 protein lmo1304 from Listeria monocytogenes serovar 1/2a (strain ATCC BAA-679 / EGD-e).